The sequence spans 195 residues: Heterogeneous nuclear ribonucleoprotein A/B (195 aa).

Positions 1-23 (EEVADGQAHGEXVYREEHHEGEK) are disordered. Positions 12-23 (XVYREEHHEGEK) are enriched in basic and acidic residues. Residues 32–48 (EETKLFVGALSWETTEK) enclose the RRM domain. Residues R119 and R122 each carry the asymmetric dimethylarginine modification. S173 is modified (phosphoserine; by CK2).

In terms of processing, extensively phosphorylated on tyrosine residues.

It localises to the cytoplasm. The protein resides in the nucleus. Functionally, may regulate mRNA translation and stability. It binds to poly(A) and poly(U) regions of RNA. This binding is inhibited when the protein is phosphorylated. In Artemia salina (Brine shrimp), this protein is Heterogeneous nuclear ribonucleoprotein A/B.